Reading from the N-terminus, the 217-residue chain is Killer cell lectin-like receptor subfamily B member 1F (217 aa).

At 1–45 (MDTSRVYGNVKTFRSPGHKQASFPSLSTDACRCPHWHHLALKLGC) the chain is on the cytoplasmic side. The LCK-binding motif motif lies at 31–34 (CRCP). The helical; Signal-anchor for type II membrane protein transmembrane segment at 46–66 (ATLILLLLTLIGLSVFVRFLV) threads the bilayer. The Extracellular portion of the chain corresponds to 67–217 (QKPLIEKCSM…WICQKTLKHV (151 aa)). The C-type lectin domain occupies 101–211 (HRNKCLIISQ…CSSDNHWICQ (111 aa)). Intrachain disulfides connect cysteine 122/cysteine 210 and cysteine 189/cysteine 202.

In terms of tissue distribution, expressed in natural killer cells and a subset of T-cells.

The protein resides in the membrane. Functionally, binds CLEC2I/Clr-g leading to activation of natural killer cells or stimulation of IL-2 production and proliferation of T-cells in response to antigen stimulation. May contribute to the formation of the immunological synapse between T-cells and antigen-presenting dendritic cells. The polypeptide is Killer cell lectin-like receptor subfamily B member 1F (Rattus norvegicus (Rat)).